Reading from the N-terminus, the 310-residue chain is Dopamine receptor-interacting protein 1 (310 aa).

In terms of assembly, interacts with DRD1.

Could be a regulator of the dopamine receptor signaling pathway. The polypeptide is Dopamine receptor-interacting protein 1 (Homo sapiens (Human)).